The sequence spans 294 residues: uncharacterized protein (294 aa).

Residues methionine 1–alanine 18 form the signal peptide.

This is an uncharacterized protein from Rickettsia bellii (strain RML369-C).